The primary structure comprises 97 residues: YcgL domain-containing protein PP_4590 (97 aa).

Residues 3–87 (RICSIYKSPR…LEDEYIEHLP (85 aa)) enclose the YcgL domain.

This Pseudomonas putida (strain ATCC 47054 / DSM 6125 / CFBP 8728 / NCIMB 11950 / KT2440) protein is YcgL domain-containing protein PP_4590.